Here is a 590-residue protein sequence, read N- to C-terminus: Interferon alpha/beta receptor 1 (590 aa).

An N-terminal signal peptide occupies residues 1 to 26 (MLAVVGAAALVLVAGAPWVLPSAAGG). Residues 27–429 (ENLKPPENID…EKTRPGSFST (403 aa)) are Extracellular-facing. 4 Fibronectin type-III domains span residues 31–125 (PPEN…PFYT), 127–226 (HMSP…TTVA), 230–327 (PVPG…FIDS), and 332–425 (LPPP…TRPG). Asn-43 carries N-linked (GlcNAc...) asparagine glycosylation. Residues Cys-78 and Cys-86 are joined by a disulfide bond. N-linked (GlcNAc...) asparagine glycans are attached at residues Asn-109, Asn-181, and Asn-214. Cystine bridges form between Cys-199/Cys-220 and Cys-284/Cys-292. N-linked (GlcNAc...) asparagine glycans are attached at residues Asn-314, Asn-370, Asn-409, and Asn-413. A disulfide bridge links Cys-397 with Cys-419. A helical transmembrane segment spans residues 430 to 449 (IWIITGLGVVFFSVMVLYAL). Topologically, residues 450–590 (RSVWKYLCHV…ALRTEPALLC (141 aa)) are cytoplasmic. Residues 483 to 492 (VLLTAEEHTE) are important for interaction with TYK2. A disordered region spans residues 514–545 (DLRKYSSQTSQDSGNYSNEEEESVGTESGQAV). A Glycyl lysine isopeptide (Lys-Gly) (interchain with G-Cter in ubiquitin) cross-link involves residue Lys-517. The segment covering 518 to 530 (YSSQTSQDSGNYS) has biased composition (polar residues). Ser-526 bears the Phosphoserine mark.

This sequence belongs to the type II cytokine receptor family. As to quaternary structure, heterodimer with IFNAR2; forming the receptor for type I interferon. Interacts with TYK2. Interacts with STAT1 and STAT2. Interacts (serine-phosphorylated form) with FBXW11, the substrate recognition component of a SCF (SKP1-CUL1-F-box protein) E3 ubiquitin-protein ligase complex. 3Interacts with SHMT2; this promotes interaction with ABRAXAS2 and the BRISC complex. Interacts with TRIM10; this interaction prevents association between IFNAR1 and TYK2. In terms of processing, ubiquitinated. This leads to its internalization and lysosomal degradation. The 'Lys-63'-linked ubiquitin chains are cleaved off by the BRISC complex; this prevents receptor internalization and degradation. Probable ubiquitination sites have been identified in human, but are poorly conserved across species. Post-translationally, phosphorylated on serine residues in response to interferon binding; this promotes interaction with FBXW11 and ubiquitination.

The protein resides in the cell membrane. Its subcellular location is the late endosome. It is found in the lysosome. Functionally, together with IFNAR2, forms the heterodimeric receptor for type I interferons (including interferons alpha, beta, epsilon, omega and kappa). Type I interferon binding activates the JAK-STAT signaling cascade, and triggers tyrosine phosphorylation of a number of proteins including JAKs, TYK2, STAT proteins and the IFNR alpha- and beta-subunits themselves. STAT proteins are then phosphorylated by the JAKs, promoting their translocation into the nucleus to regulate expression of interferon-regulated genes. Can also act independently of IFNAR2: form an active IFNB1 receptor by itself and activate a signaling cascade that does not involve activation of the JAK-STAT pathway. This Mus musculus (Mouse) protein is Interferon alpha/beta receptor 1 (Ifnar1).